Here is a 497-residue protein sequence, read N- to C-terminus: Zinc finger CCCH domain-containing protein 22 (497 aa).

A C3H1-type zinc finger spans residues 136 to 163 (SESMMICKFFMQQRCRFGSSCRSSHGLD). Residues 236 to 281 (AQMTDDDGEEEEEEDEQQSASDSEDSVSSDYDEGSPQGIGFLESTN) form a disordered region. Residues 239-268 (TDDDGEEEEEEDEQQSASDSEDSVSSDYDE) are compositionally biased toward acidic residues. In terms of domain architecture, G-patch spans 300–346 (TRGIASKMMASMGYREGMGLGVSGQGILNPILVKVLPAKRSLDYALE). A disordered region spans residues 352–387 (ECKSEKQKKKRSRGGKRKRGKKFAEAAKAAKQEEES). Residues 357 to 372 (KQKKKRSRGGKRKRGK) are compositionally biased toward basic residues. The segment covering 373–387 (KFAEAAKAAKQEEES) has biased composition (basic and acidic residues).

The polypeptide is Zinc finger CCCH domain-containing protein 22 (Arabidopsis thaliana (Mouse-ear cress)).